A 150-amino-acid chain; its full sequence is MTLQLNTIALLLVILLILGVLSNNSAITISAAVLLIMQQTFLSSHIPLLEKYGVKIGIIILTIGVLSPLVSGKIQLPDLSGFLSWKMALSIAVGVLVAWLAGKGVPLMGEQPILVTGLLIGTIIGVAFLGGIPVGPLIAAGILALLLGKI.

4 consecutive transmembrane segments (helical) span residues 1–21 (MTLQLNTIALLLVILLILGVL), 52–72 (YGVKIGIIILTIGVLSPLVSG), 81–101 (GFLSWKMALSIAVGVLVAWLA), and 123–143 (IIGVAFLGGIPVGPLIAAGIL).

It belongs to the UPF0756 family.

The protein localises to the cell membrane. In Haemophilus influenzae (strain 86-028NP), this protein is UPF0756 membrane protein NTHI1233.